Here is a 368-residue protein sequence, read N- to C-terminus: Phosphate acyltransferase (368 aa).

The protein belongs to the PlsX family. As to quaternary structure, homodimer. Probably interacts with PlsY.

It localises to the cytoplasm. It carries out the reaction a fatty acyl-[ACP] + phosphate = an acyl phosphate + holo-[ACP]. It functions in the pathway lipid metabolism; phospholipid metabolism. Catalyzes the reversible formation of acyl-phosphate (acyl-PO(4)) from acyl-[acyl-carrier-protein] (acyl-ACP). This enzyme utilizes acyl-ACP as fatty acyl donor, but not acyl-CoA. This is Phosphate acyltransferase from Herpetosiphon aurantiacus (strain ATCC 23779 / DSM 785 / 114-95).